A 126-amino-acid polypeptide reads, in one-letter code: Protein ApaG (126 aa).

The ApaG domain occupies 2 to 126 (SDPRYQIDVS…FRLAVPGALH (125 aa)).

In Azotobacter vinelandii (strain DJ / ATCC BAA-1303), this protein is Protein ApaG.